Here is a 211-residue protein sequence, read N- to C-terminus: ATP phosphoribosyltransferase (211 aa).

This sequence belongs to the ATP phosphoribosyltransferase family. Short subfamily. As to quaternary structure, heteromultimer composed of HisG and HisZ subunits.

Its subcellular location is the cytoplasm. It catalyses the reaction 1-(5-phospho-beta-D-ribosyl)-ATP + diphosphate = 5-phospho-alpha-D-ribose 1-diphosphate + ATP. It participates in amino-acid biosynthesis; L-histidine biosynthesis; L-histidine from 5-phospho-alpha-D-ribose 1-diphosphate: step 1/9. Catalyzes the condensation of ATP and 5-phosphoribose 1-diphosphate to form N'-(5'-phosphoribosyl)-ATP (PR-ATP). Has a crucial role in the pathway because the rate of histidine biosynthesis seems to be controlled primarily by regulation of HisG enzymatic activity. This chain is ATP phosphoribosyltransferase, found in Pseudomonas syringae pv. syringae (strain B728a).